Here is a 614-residue protein sequence, read N- to C-terminus: MSAQVSKKRGGSNPPKTGQHAASSTTSRTESSATSQTIYERQEVETRTQRTPGGLLLAASSAEVSSGTAGLAGSPLSRHQEKEEFKLLNNRFANYIDTIRAQQEEISVLRRKVETVSSKEVVENQKIKERYNLEIANLRRALDEVSRDLAAAIIERDSLRPERDARLLLDNEKKTLQKRSKDAEAALKDAKNQLAALRDQAKDHDNEIHGLTTENSSLKLQIENLKKDLSQETNLRVDAENRLQSEREKNALLEGIHNEEIVSLRNQRRTEITEVETRMGEEYQSKIVEQLNDLRADLEAVAHEMRLDLERSYQNQLEDSQDLANRYRDEARALLADLSAAQDRIKETQTRSEKQLQELRLQLQRLQAELNGKDDEVQRLQKLLADRQAELQNTHHELSRQIASYQELLDEKIHLDAELATYNALLRTEEERLNMKSPPFPSTPDSQRRGTKRRIADSYTRTRFRNEASATGDIHISEIDAEGQFVRLENKSGQDVVIGGWKLLMVSDNGEDNKTDYKIHSNQVIKAHSSTTIWSANTNVVHEPPADIVMEGRWLVGDHTSVTLSTSDGVEVARREMTQSSTRDDSYLGPSGLPKRSRLVVADSSDHQKNCVIM.

The span at 1–10 (MSAQVSKKRG) shows a compositional bias: basic residues. The disordered stretch occupies residues 1–51 (MSAQVSKKRGGSNPPKTGQHAASSTTSRTESSATSQTIYERQEVETRTQRT). A head region spans residues 1-76 (MSAQVSKKRG…GTAGLAGSPL (76 aa)). Over residues 21 to 37 (AASSTTSRTESSATSQT) the composition is skewed to low complexity. Residues 77–117 (SRHQEKEEFKLLNNRFANYIDTIRAQQEEISVLRRKVETVS) form a coil 1A region. The IF rod domain maps to 81–433 (EKEEFKLLNN…ALLRTEEERL (353 aa)). The segment at 118-128 (SKEVVENQKIK) is linker 1. The interval 129 to 268 (ERYNLEIANL…EEIVSLRNQR (140 aa)) is coil 1B. A linker 2 region spans residues 269–286 (RTEITEVETRMGEEYQSK). Residues 287–426 (IVEQLNDLRA…AELATYNALL (140 aa)) form a coil 2 region. The segment at 427-611 (RTEEERLNMK…ADSSDHQKNC (185 aa)) is tail. The tract at residues 433 to 454 (LNMKSPPFPSTPDSQRRGTKRR) is disordered. Positions 449–458 (RGTKRRIADS) match the Nuclear localization signal motif. The LTD domain maps to 462 to 581 (TRFRNEASAT…VARREMTQSS (120 aa)). A lipid anchor (S-farnesyl cysteine) is attached at cysteine 611. Residues 612–614 (VIM) constitute a propeptide, removed in mature form.

Belongs to the intermediate filament family.

The protein localises to the nucleus inner membrane. In terms of biological role, intermediate filament (IF) protein, component of the nuclear lamina, a fibrous layer on the nucleoplasmic side of the inner nuclear membrane, which is thought to provide a framework for the nuclear envelope. The protein is Lamin-2 of Hypsibius exemplaris (Freshwater tardigrade).